We begin with the raw amino-acid sequence, 506 residues long: AMP phosphorylase (506 aa).

Residues Gly-168, 194–199, and Thr-203 each bind AMP; that span reads SRAITG. Catalysis depends on Asp-256, which acts as the Proton donor. AMP contacts are provided by Ser-264 and Lys-288.

Belongs to the thymidine/pyrimidine-nucleoside phosphorylase family. Type 2 subfamily.

It carries out the reaction AMP + phosphate = alpha-D-ribose 1,5-bisphosphate + adenine. It catalyses the reaction CMP + phosphate = cytosine + alpha-D-ribose 1,5-bisphosphate. The catalysed reaction is UMP + phosphate = alpha-D-ribose 1,5-bisphosphate + uracil. Functionally, catalyzes the conversion of AMP and phosphate to adenine and ribose 1,5-bisphosphate (R15P). Exhibits phosphorylase activity toward CMP and UMP in addition to AMP. Functions in an archaeal AMP degradation pathway, together with R15P isomerase and RubisCO. In Methanococcoides burtonii (strain DSM 6242 / NBRC 107633 / OCM 468 / ACE-M), this protein is AMP phosphorylase.